The primary structure comprises 185 residues: Photosystem I assembly protein Ycf4 (185 aa).

The next 2 helical transmembrane spans lie at 24–44 (YIIG…SISS) and 66–86 (IIMG…WYLV).

This sequence belongs to the Ycf4 family.

It localises to the cellular thylakoid membrane. Its function is as follows. Seems to be required for the assembly of the photosystem I complex. In Prochlorococcus marinus (strain AS9601), this protein is Photosystem I assembly protein Ycf4.